Consider the following 535-residue polypeptide: Succinate-semialdehyde dehydrogenase, mitochondrial (535 aa).

The N-terminal 47 residues, Met1–Tyr47, are a transit peptide targeting the mitochondrion. N6-acetyllysine; alternate is present on Lys126. An N6-succinyllysine; alternate modification is found at Lys126. Lys135 and Lys184 each carry N6-succinyllysine. Residues Arg213 and Lys228–Glu231 contribute to the NAD(+) site. Arg213 contributes to the substrate binding site. Lys265 carries the post-translational modification N6-acetyllysine; alternate. Residue Lys265 is modified to N6-succinyllysine; alternate. Gly284–Gly289 provides a ligand contact to NAD(+). The Proton acceptor role is filled by Glu306. Arg334 is a binding site for substrate. The active-site Nucleophile is Cys340. Cys340 and Cys342 are disulfide-bonded. Lys365 bears the N6-acetyllysine mark. At Lys402 the chain carries N6-succinyllysine. Lys411 is subject to N6-acetyllysine. A substrate-binding site is contributed by Ser498. At Ser499 the chain carries Phosphoserine.

Belongs to the aldehyde dehydrogenase family. In terms of assembly, homotetramer.

The protein resides in the mitochondrion. The catalysed reaction is succinate semialdehyde + NAD(+) + H2O = succinate + NADH + 2 H(+). It functions in the pathway amino-acid degradation; 4-aminobutanoate degradation. With respect to regulation, redox-regulated. Inhibited under oxydizing conditions. Functionally, catalyzes one step in the degradation of the inhibitory neurotransmitter gamma-aminobutyric acid (GABA). This is Succinate-semialdehyde dehydrogenase, mitochondrial (ALDH5A1) from Pan troglodytes (Chimpanzee).